Here is a 150-residue protein sequence, read N- to C-terminus: Protein-export protein SecB (150 aa).

Belongs to the SecB family. Homotetramer, a dimer of dimers. One homotetramer interacts with 1 SecA dimer.

The protein resides in the cytoplasm. One of the proteins required for the normal export of preproteins out of the cell cytoplasm. It is a molecular chaperone that binds to a subset of precursor proteins, maintaining them in a translocation-competent state. It also specifically binds to its receptor SecA. This chain is Protein-export protein SecB, found in Psychrobacter cryohalolentis (strain ATCC BAA-1226 / DSM 17306 / VKM B-2378 / K5).